Reading from the N-terminus, the 20-residue chain is Phospholipase A2 II-5b (20 aa).

This sequence belongs to the phospholipase A2 family. Group I subfamily. Requires Ca(2+) as cofactor. Expressed by the venom gland.

Its subcellular location is the secreted. It catalyses the reaction a 1,2-diacyl-sn-glycero-3-phosphocholine + H2O = a 1-acyl-sn-glycero-3-phosphocholine + a fatty acid + H(+). In terms of biological role, snake venom phospholipase A2 (PLA2) that exhibits weak enzymatic activity. PLA2 catalyzes the calcium-dependent hydrolysis of the 2-acyl groups in 3-sn-phosphoglycerides. This is Phospholipase A2 II-5b from Notechis scutatus scutatus (Mainland tiger snake).